A 757-amino-acid polypeptide reads, in one-letter code: Zinc finger CCCH domain-containing protein 5 (757 aa).

The segment at 1 to 127 (MEQANEKEEE…REEEERRWKD (127 aa)) is disordered. Residues 13–35 (HEEAAGEKESFEESKEKAAEMSR) are compositionally biased toward basic and acidic residues. Basic residues predominate over residues 36-50 (KEKRKAMKKLKRKQV). Residues 51-127 (RKEIAAKERE…REEEERRWKD (77 aa)) show a composition bias toward basic and acidic residues. The segment at 240–268 (EQDKAHCPFHLKTGACRFGQRCSRVHFYP) adopts a C3H1-type 1 zinc-finger fold. In terms of domain architecture, RRM spans 295 to 372 (YTDEEAELCY…KQVNCEFVNI (78 aa)). The C3H1-type 2 zinc finger occupies 374–404 (RWKVAICGEYMKSRLKTCSRGSACNFIHCFR). The segment at 441–757 (HESSGSLNDS…EEEIERWRPV (317 aa)) is disordered. Polar residues predominate over residues 444–455 (SGSLNDSISDLS). The segment covering 487 to 546 (YHGDTQDSTREDKLRRHAENCHDGDDSPSRDGSLEREMYKERRYAKDTLHRDSRWSEHSP) has biased composition (basic and acidic residues). 2 stretches are compositionally biased toward basic residues: residues 547–557 (GHRVGRKRIHG) and 600–609 (KTHRSSRKHS). 3 stretches are compositionally biased toward basic and acidic residues: residues 610–634 (REGS…DKSH), 644–672 (RSSS…KRSV), and 681–721 (SDKD…ETHK). Residues 722–733 (ERRHRHRKRRRT) show a composition bias toward basic residues.

The polypeptide is Zinc finger CCCH domain-containing protein 5 (Arabidopsis thaliana (Mouse-ear cress)).